The following is a 487-amino-acid chain: Acetylcholine receptor subunit beta-type acr-3 (487 aa).

Positions 1–20 (MQKIWLFSIITIFLITELQC) are cleaved as a signal peptide. Topologically, residues 21 to 231 (YPNSAEERLL…KIRRKALFYT (211 aa)) are extracellular. A glycan (N-linked (GlcNAc...) asparagine) is linked at asparagine 46. A disulfide bridge links cysteine 151 with cysteine 165. 3 consecutive transmembrane segments (helical) span residues 232–252 (VILI…FYLP), 259–279 (ITLA…VSKI), and 294–314 (LLMT…IINV). The Cytoplasmic portion of the chain corresponds to 315 to 439 (YFRGPATHIM…WKFVSVVIDR (125 aa)). A disordered region spans residues 380-400 (ISEQPKQTSRKDGSSSEEKLS). The helical transmembrane segment at 440–460 (LLLYLFFAVTTGGTVGILLSA) threads the bilayer.

It belongs to the ligand-gated ion channel (TC 1.A.9) family. Acetylcholine receptor (TC 1.A.9.1) subfamily. In terms of assembly, component of nicotinic acetylcholine receptor. In cholinergic motoneurons, composed of 2 non-alpha subunits acr-2 and acr-3, and 3 alpha subunits unc-38, unc-63 and acr-12.

The protein resides in the postsynaptic cell membrane. It is found in the cell membrane. Non-alpha subunit of nicotinic acetylcholine receptor (nAChR). Probably acts in cholinergic motoneurons to regulate presynaptic neurotransmitter release, thereby ensuring normal level of excitation of cholinergic motoneurons during locomotion. The chain is Acetylcholine receptor subunit beta-type acr-3 (acr-3) from Caenorhabditis elegans.